We begin with the raw amino-acid sequence, 251 residues long: Probable caffeoyl-CoA O-methyltransferase 3 (251 aa).

Residues T61, D83, 85–86 (GV), S91, D109, and A138 each bind S-adenosyl-L-methionine. D160 serves as a coordination point for a divalent metal cation. D162 contacts S-adenosyl-L-methionine. The a divalent metal cation site is built by D186 and N187.

It belongs to the class I-like SAM-binding methyltransferase superfamily. Cation-dependent O-methyltransferase family. CCoAMT subfamily.

It carries out the reaction (E)-caffeoyl-CoA + S-adenosyl-L-methionine = (E)-feruloyl-CoA + S-adenosyl-L-homocysteine + H(+). The sequence is that of Probable caffeoyl-CoA O-methyltransferase 3 (omt1) from Dictyostelium discoideum (Social amoeba).